The sequence spans 648 residues: ABC transporter G family member 14 (648 aa).

The 252-residue stretch at 53-304 (LKFEEVVYKV…FSSLGFSTSL (252 aa)) folds into the ABC transporter domain. Position 99 to 106 (99 to 106 (GPSGSGKT)) interacts with ATP. An N-linked (GlcNAc...) asparagine glycan is attached at N346. The 207-residue stretch at 384-590 (YQFTVLLQRG…CYKLLLGIQY (207 aa)) folds into the ABC transmembrane type-2 domain. 7 consecutive transmembrane segments (helical) span residues 405–425 (LRIF…WHTP), 435–455 (LLFF…VFTF), 485–505 (LPLE…MGGL), 512–532 (FILS…LGLA), 543–562 (ATTL…GYYV), 569–591 (IVWL…IQYT), and 620–640 (LWID…MAYM).

Belongs to the ABC transporter superfamily. ABCG family. Eye pigment precursor importer (TC 3.A.1.204) subfamily. In terms of assembly, forms heterodimers with ABCG11. Accumulates primarily in the pericycle and stelar cells of roots. Expressed in leaves, stems, flowers and siliques, and, at low levels, in roots. Accumulates in the phloem.

The protein resides in the cell membrane. Positive regulator of plant growth which acts as an efflux pump involved in the major root-to-shoot (acropetal) long-distance cytokinin (CK) transport via the xylem sap. Together with ABCG9 and ABCG11, required for vascular development by regulating lipid/sterol homeostasis. Involved in CK-dependent responses to oxidative stress such as hydrogen peroxide H(2)O(2). Functionally, (Microbial infection) Required for SNC1-mediated defense response against the virulent pathogen Pseudomonas syringae pv. tomato DC3000 by promoting the accumulation of trans-zeatin (tZ)-type cytokinins (CK) in the shoot. The polypeptide is ABC transporter G family member 14 (Arabidopsis thaliana (Mouse-ear cress)).